The following is a 268-amino-acid chain: CCAAT/enhancer-binding protein delta (268 aa).

3 disordered regions span residues 1 to 48 (MSAA…LGST), 97 to 132 (GLEL…DAPG), and 152 to 219 (AAQP…NQEM). An N-acetylserine modification is found at Ser2. A Glycyl lysine isopeptide (Lys-Gly) (interchain with G-Cter in SUMO) cross-link involves residue Lys120. Pro residues predominate over residues 155–167 (PTPPTSPEPPRGS). The segment covering 177-201 (VREKGAGKRGPDRGSPEYRQRRERN) has biased composition (basic and acidic residues). Residues 191-254 (SPEYRQRRER…AGLRQFFKKL (64 aa)) form the bZIP domain. Residues 195 to 222 (RQRRERNNIAVRKSRDKAKRRNQEMQQK) are basic motif. Residues 226 to 254 (LSAENEKLHQRVEQLTRDLAGLRQFFKKL) form a leucine-zipper region.

It belongs to the bZIP family. C/EBP subfamily. In terms of assembly, binds DNA as a homodimer and as a heterodimer. Can form stable heterodimers with CEBPA, CEBPB and CEBPE. Directly interacts with SPI1/PU.1; this interaction does not affect DNA-binding properties of each partner. Interacts with PRDM16.

The protein resides in the nucleus. Its function is as follows. Transcription activator that recognizes two different DNA motifs: the CCAAT homology common to many promoters and the enhanced core homology common to many enhancers. Important transcription factor regulating the expression of genes involved in immune and inflammatory responses. Transcriptional activator that enhances IL6 transcription alone and as heterodimer with CEBPB. The chain is CCAAT/enhancer-binding protein delta (Cebpd) from Mus musculus (Mouse).